Consider the following 427-residue polypeptide: Glutamate-1-semialdehyde 2,1-aminomutase (427 aa).

At lysine 267 the chain carries N6-(pyridoxal phosphate)lysine.

Belongs to the class-III pyridoxal-phosphate-dependent aminotransferase family. HemL subfamily. In terms of assembly, homodimer. Pyridoxal 5'-phosphate is required as a cofactor.

The protein resides in the cytoplasm. It carries out the reaction (S)-4-amino-5-oxopentanoate = 5-aminolevulinate. It functions in the pathway porphyrin-containing compound metabolism; protoporphyrin-IX biosynthesis; 5-aminolevulinate from L-glutamyl-tRNA(Glu): step 2/2. The sequence is that of Glutamate-1-semialdehyde 2,1-aminomutase from Thermodesulfovibrio yellowstonii (strain ATCC 51303 / DSM 11347 / YP87).